A 105-amino-acid polypeptide reads, in one-letter code: Multidrug resistance protein EbrA (105 aa).

4 consecutive transmembrane segments (helical) span residues 2 to 22 (LVGY…AAML), 35 to 55 (ALVV…LNHI), 57 to 77 (LSLS…VIGV), and 84 to 104 (LNAK…LLNW).

Belongs to the drug/metabolite transporter (DMT) superfamily. Small multidrug resistance (SMR) (TC 2.A.7.1) family. EbrA/EbrB subfamily. The efflux pump is composed of EbrA and EbrB.

It localises to the cell membrane. Functionally, part of a multidrug efflux pump. Confers resistance to cationic lipophilic dyes such as ethidium bromide, acriflavine, pyronine Y and safranin O. The efflux is probably coupled to an influx of protons. The sequence is that of Multidrug resistance protein EbrA (ebrA) from Bacillus atrophaeus.